A 72-amino-acid polypeptide reads, in one-letter code: Large ribosomal subunit protein bL31 (72 aa).

Positions 16, 18, 38, and 41 each coordinate Zn(2+).

The protein belongs to the bacterial ribosomal protein bL31 family. Type A subfamily. As to quaternary structure, part of the 50S ribosomal subunit. Zn(2+) is required as a cofactor.

Binds the 23S rRNA. The chain is Large ribosomal subunit protein bL31 from Azoarcus sp. (strain BH72).